Consider the following 248-residue polypeptide: MKIIIAPAKKMIIDQDAFPALTEPIYLDQTQQLLAQLQHLTYPEAKTLWHCSDKLAQPNYDWLQKIDLTRNLTPAILSYSGIQYRYMAPDVFTQPALDYIQANLRILSGFYGILRPFDGIVPYRLEMQARLAVGQAKNLYAFWGDRLYQALTPRPEPIINLASQEYAKTIAPYLAPHQSMIDIVFASFIDGKLKTKATLARMARGAMVRFLAEHQIDDVTAIRTFDHPDYQFDEKRSTANRFVFIYQH.

Belongs to the UPF0246 family.

This is UPF0246 protein lp_0089 from Lactiplantibacillus plantarum (strain ATCC BAA-793 / NCIMB 8826 / WCFS1) (Lactobacillus plantarum).